A 153-amino-acid polypeptide reads, in one-letter code: Ribosome maturation factor RimP (153 aa).

Belongs to the RimP family.

The protein localises to the cytoplasm. Required for maturation of 30S ribosomal subunits. The protein is Ribosome maturation factor RimP of Clostridium tetani (strain Massachusetts / E88).